The following is a 430-amino-acid chain: MTAIVDIIGREILDSRGNPTVEVDVVLEDGAVGRAAVPSGASTGAHEAVELRDGDKERYFGKGVLKAVEAVNGEIFDALGGMDAEQQVQIDEIMIGLDGTPNKSRLGANAILGVSLAVAKAAAESFDMPLYRYVGGTSARTLPVPMMNIINGGVHADNPIDFQEFMIMPIGAPSFSEALRMGAEVFHTLKKSLHDEGHNTNVGDEGGFAPNLKSADEALTYIMRAIEKAGYKPGEDIALALDPASSEFFKNGSYVYEGEKKARNIDAQAKYLAELVGRYPIVSIEDGMAEDDFEGWKQVTELIGDKCQLVGDDLFVTNVERLSDGIKNGRANSILIKVNQIGTLTETLAAIEMAYKAGYTAVMSHRSGETEDSTIADLAVASNCGQIKTGSLARADRTAKYNQLLRIEQELGGQAKFAGRAALKAFRYLD.

Position 163 (Q163) interacts with (2R)-2-phosphoglycerate. The active-site Proton donor is the E205. 3 residues coordinate Mg(2+): D242, E285, and D312. K337, R366, S367, and K388 together coordinate (2R)-2-phosphoglycerate. K337 acts as the Proton acceptor in catalysis.

The protein belongs to the enolase family. Mg(2+) serves as cofactor.

It localises to the cytoplasm. The protein resides in the secreted. It is found in the cell surface. It carries out the reaction (2R)-2-phosphoglycerate = phosphoenolpyruvate + H2O. The protein operates within carbohydrate degradation; glycolysis; pyruvate from D-glyceraldehyde 3-phosphate: step 4/5. Catalyzes the reversible conversion of 2-phosphoglycerate (2-PG) into phosphoenolpyruvate (PEP). It is essential for the degradation of carbohydrates via glycolysis. The chain is Enolase from Rhodopseudomonas palustris (strain BisB18).